The chain runs to 409 residues: Arginine deiminase (409 aa).

Cys399 functions as the Amidino-cysteine intermediate in the catalytic mechanism.

The protein belongs to the arginine deiminase family.

The protein localises to the cytoplasm. It carries out the reaction L-arginine + H2O = L-citrulline + NH4(+). It functions in the pathway amino-acid degradation; L-arginine degradation via ADI pathway; carbamoyl phosphate from L-arginine: step 1/2. This chain is Arginine deiminase, found in Borreliella afzelii (strain PKo) (Borrelia afzelii).